A 131-amino-acid chain; its full sequence is D-ribose pyranase (131 aa).

Histidine 20 acts as the Proton donor in catalysis. Substrate is bound by residues aspartate 28, histidine 98, and 120 to 122 (YSN).

It belongs to the RbsD / FucU family. RbsD subfamily. As to quaternary structure, homodecamer.

Its subcellular location is the cytoplasm. It carries out the reaction beta-D-ribopyranose = beta-D-ribofuranose. The protein operates within carbohydrate metabolism; D-ribose degradation; D-ribose 5-phosphate from beta-D-ribopyranose: step 1/2. Functionally, catalyzes the interconversion of beta-pyran and beta-furan forms of D-ribose. The sequence is that of D-ribose pyranase from Pediococcus pentosaceus (strain ATCC 25745 / CCUG 21536 / LMG 10740 / 183-1w).